Here is a 425-residue protein sequence, read N- to C-terminus: Xylose isomerase (425 aa).

Catalysis depends on residues His101 and Asp104. Glu232, Glu268, His271, Asp296, Asp307, Asp309, and Asp339 together coordinate Mg(2+).

Belongs to the xylose isomerase family. As to quaternary structure, homotetramer. Requires Mg(2+) as cofactor.

Its subcellular location is the cytoplasm. The catalysed reaction is alpha-D-xylose = alpha-D-xylulofuranose. This chain is Xylose isomerase, found in Salmonella paratyphi A (strain ATCC 9150 / SARB42).